The chain runs to 188 residues: MAANNRSDHGSDENTRLYNPYQNYEVPINKSQYLYKLPTSPEFLFTEEALRQRRSWGENLTFYTGTAYLGGSVAGASVGVITGVKSFESGDTTKLKINRILNSSGQTGRTWGNRIGIIGLVYAGIESGIVAATDRDDVWTSVVAGLGTGAVCRAARGVRSAAVAGALGGLAAGAVVAGKQIVKRYVPI.

The next 4 helical transmembrane spans lie at 64–84 (TGTAYLGGSVAGASVGVITGV), 112–131 (GNRIGIIGLVYAGIESGIVA), 138–154 (VWTSVVAGLGTGAVCRA), and 161–178 (AAVAGALGGLAAGAVVAG).

This sequence belongs to the Tim17/Tim22/Tim23 family. Homomultimer. Component of the TIM17:23 complex at least composed of TIM23, TIM17 and TIM50. The complex interacts with the TIM44 component of the PAM complex. Also part of the NADH-ubiquinone oxidoreductase complex I. Interacts with OEP163, TIM17-2, TIM21, TIM50 and MPPA2. As to expression, expressed in roots and young cotyledons. Detected in leaves and flowers.

The protein resides in the mitochondrion inner membrane. In terms of biological role, essential component of the TIM17:23 complex, a complex that mediates the translocation of transit peptide-containing proteins across the mitochondrial inner membrane. Links the inner and outer membranes. This Arabidopsis thaliana (Mouse-ear cress) protein is Mitochondrial import inner membrane translocase subunit TIM23-2 (TIM23-2).